The primary structure comprises 64 residues: Large ribosomal subunit protein bL33 (64 aa).

Belongs to the bacterial ribosomal protein bL33 family.

In Synechococcus sp. (strain WH7803), this protein is Large ribosomal subunit protein bL33.